Consider the following 461-residue polypeptide: Methylthioribose transporter (461 aa).

12 helical membrane passes run 33–53, 56–76, 102–122, 152–172, 185–205, 213–233, 254–274, 301–321, 355–375, 376–396, 409–429, and 432–452; these read LLGI…TVAA, AGPA…LAAF, LLAF…LSAV, MAGA…TAIV, VIVL…IGYV, FMPF…FAYL, VGII…SLVL, VAGI…LALL, TWLT…GTLA, HLVN…VIVL, VPFV…FMYS, and GVTW…YFLY.

It belongs to the amino acid-polyamine-organocation (APC) superfamily.

Its subcellular location is the cell membrane. In terms of biological role, involved in import of methylthioribose (MTR) into the cell. The sequence is that of Methylthioribose transporter from Bacillus subtilis (strain 168).